A 128-amino-acid polypeptide reads, in one-letter code: Large ribosomal subunit protein bL17 (128 aa).

This sequence belongs to the bacterial ribosomal protein bL17 family. Part of the 50S ribosomal subunit. Contacts protein L32.

The protein is Large ribosomal subunit protein bL17 of Baumannia cicadellinicola subsp. Homalodisca coagulata.